The following is a 293-amino-acid chain: 1D-myo-inositol 2-acetamido-2-deoxy-alpha-D-glucopyranoside deacetylase (293 aa).

Residues H15, D18, and H148 each coordinate Zn(2+).

Belongs to the MshB deacetylase family. Requires Zn(2+) as cofactor.

The enzyme catalyses 1D-myo-inositol 2-acetamido-2-deoxy-alpha-D-glucopyranoside + H2O = 1D-myo-inositol 2-amino-2-deoxy-alpha-D-glucopyranoside + acetate. Catalyzes the deacetylation of 1D-myo-inositol 2-acetamido-2-deoxy-alpha-D-glucopyranoside (GlcNAc-Ins) in the mycothiol biosynthesis pathway. This is 1D-myo-inositol 2-acetamido-2-deoxy-alpha-D-glucopyranoside deacetylase from Corynebacterium diphtheriae (strain ATCC 700971 / NCTC 13129 / Biotype gravis).